Here is a 616-residue protein sequence, read N- to C-terminus: Spastin (616 aa).

The disordered stretch occupies residues 1-44; it reads MNSPGGRGKKKGSGGPSSPVPPRPPPPCLASSRPAPRPAPPPQS. Residues 1–50 form a required for nuclear localization region; the sequence is MNSPGGRGKKKGSGGPSSPVPPRPPPPCLASSRPAPRPAPPPQSPHKRNL. At 1–56 the chain is on the cytoplasmic side; it reads MNSPGGRGKKKGSGGPSSPVPPRPPPPCLASSRPAPRPAPPPQSPHKRNLYYFSYP. Residues 1–80 are required for interaction with ATL1; it reads MNSPGGRGKK…LGLLFVWLCQ (80 aa). The required for midbody localization stretch occupies residues 1 to 194; that stretch reads MNSPGGRGKK…LVMAKDRLQL (194 aa). Residues 1-300 are required for interaction with RTN1; sequence MNSPGGRGKK…STPKTNRTNK (300 aa). The short motif at 4-11 is the Nuclear localization signal element; the sequence is PGGRGKKK. 2 stretches are compositionally biased toward pro residues: residues 18–28 and 35–44; these read SPVPPRPPPPC and APRPAPPPQS. Residues 50 to 87 are required for interaction with SSNA1 and microtubules; it reads LYYFSYPLFLGFALLRLVAFHLGLLFVWLCQRFSRALM. Positions 57–77 form an intramembrane region, helical; the sequence is LFLGFALLRLVAFHLGLLFVW. The Nuclear export signal motif lies at 59 to 67; it reads LGFALLRLV. Topologically, residues 78 to 616 are cytoplasmic; it reads LCQRFSRALM…WNKDFGDTTV (539 aa). Residues 112 to 196 form a sufficient for interaction with CHMP1B region; it reads EVERVRAFHK…MAKDRLQLLE (85 aa). Positions 114-200 are required for interaction with microtubules; sequence ERVRAFHKQA…RLQLLEKLQP (87 aa). An MIT domain is found at 120–195; that stretch reads HKQAFEYISV…VMAKDRLQLL (76 aa). The tract at residues 223–266 is disordered; it reads GHLQSESGAVPKRKDPLTHPSNSLPRSKAIMKTGSTGLSGHHRA. Residues 226–328 are sufficient for interaction with microtubules; that stretch reads QSESGAVPKR…NVDSNLANFI (103 aa). A sufficient for microtubule severing region spans residues 228–616; sequence ESGAVPKRKD…WNKDFGDTTV (389 aa). Phosphoserine is present on residues Ser245 and Ser268. The segment at 270–328 is required for interaction with microtubules and microtubule severing; sequence SGLSIVSGMRQGPGPTTATHKSTPKTNRTNKPSTPTTAPRKKKDLKNFRNVDSNLANFI. Residues 278 to 311 form a disordered region; sequence MRQGPGPTTATHKSTPKTNRTNKPSTPTTAPRKK. The span at 283–306 shows a compositional bias: polar residues; it reads GPTTATHKSTPKTNRTNKPSTPTT. At Thr306 the chain carries Phosphothreonine. The Nuclear localization signal signature appears at 309-312; that stretch reads RKKK. Residues 310–312 are required for interaction with microtubules; the sequence is KKK. An ATP-binding site is contributed by 382–389; sequence GPPGNGKT. A Phosphoserine modification is found at Ser597.

Belongs to the AAA ATPase family. Spastin subfamily. As to quaternary structure, homohexamer. Mostly monomeric, but assembles into hexameric structure for short periods of time. Oligomerization seems to be a prerequisite for catalytic activity. Binding to ATP in a cleft between two adjacent subunits stabilizes the homohexameric form. Binds to microtubules at least in part via the alpha-tubulin and beta-tubulin tails. The hexamer adopts a ring conformation through which microtubules pass prior to being severed. Does not interact strongly with tubulin heterodimers. Interacts (via MIT domain) with CHMP1B; the interaction is direct. Interacts with SSNA1. Interacts with ATL1. Interacts with RTN1. Interacts with ZFYVE27. Interacts with REEP1. Interacts (via MIT domain) with IST1.

It localises to the membrane. The protein resides in the endoplasmic reticulum. It is found in the midbody. Its subcellular location is the cytoplasm. The protein localises to the cytoskeleton. It localises to the microtubule organizing center. The protein resides in the centrosome. It is found in the perinuclear region. Its subcellular location is the nucleus. The protein localises to the spindle. It localises to the cell projection. The protein resides in the axon. The catalysed reaction is n ATP + n H2O + a microtubule = n ADP + n phosphate + (n+1) alpha/beta tubulin heterodimers.. Allosteric enzyme with a cooperative mechanism; at least two neighbor subunits influence each other strongly in spastin hexamers. Microtubule binding promotes cooperative interactions among spastin subunits. In terms of biological role, ATP-dependent microtubule severing protein that specifically recognizes and cuts microtubules that are polyglutamylated. Preferentially recognizes and acts on microtubules decorated with short polyglutamate tails: severing activity increases as the number of glutamates per tubulin rises from one to eight, but decreases beyond this glutamylation threshold. Severing activity is not dependent on tubulin acetylation or detyrosination. Microtubule severing promotes reorganization of cellular microtubule arrays and the release of microtubules from the centrosome following nucleation. It is critical for the biogenesis and maintenance of complex microtubule arrays in axons, spindles and cilia. SPAST is involved in abscission step of cytokinesis and nuclear envelope reassembly during anaphase in cooperation with the ESCRT-III complex. Recruited at the midbody, probably by IST1, and participates in membrane fission during abscission together with the ESCRT-III complex. Recruited to the nuclear membrane by IST1 and mediates microtubule severing, promoting nuclear envelope sealing and mitotic spindle disassembly during late anaphase. Required for membrane traffic from the endoplasmic reticulum (ER) to the Golgi and endosome recycling. Recruited by IST1 to endosomes and regulates early endosomal tubulation and recycling by mediating microtubule severing. Probably plays a role in axon growth and the formation of axonal branches. The protein is Spastin of Sus scrofa (Pig).